A 592-amino-acid chain; its full sequence is V-type ATP synthase alpha chain (592 aa).

232–239 (GPFGAGKT) serves as a coordination point for ATP.

The protein belongs to the ATPase alpha/beta chains family.

It carries out the reaction ATP + H2O + 4 H(+)(in) = ADP + phosphate + 5 H(+)(out). In terms of biological role, produces ATP from ADP in the presence of a proton gradient across the membrane. The V-type alpha chain is a catalytic subunit. In Clostridium botulinum (strain Eklund 17B / Type B), this protein is V-type ATP synthase alpha chain.